The chain runs to 475 residues: Ribulose bisphosphate carboxylase large chain (475 aa).

Positions 1–2 (MS) are excised as a propeptide. Pro-3 carries the N-acetylproline modification. Lys-14 is modified (N6,N6,N6-trimethyllysine). 2 residues coordinate substrate: Asn-123 and Thr-173. Catalysis depends on Lys-175, which acts as the Proton acceptor. Residue Lys-177 coordinates substrate. Residues Lys-201, Asp-203, and Glu-204 each contribute to the Mg(2+) site. Lys-201 is subject to N6-carboxylysine. The Proton acceptor role is filled by His-294. Residues Arg-295, His-327, and Ser-379 each coordinate substrate.

Belongs to the RuBisCO large chain family. Type I subfamily. Heterohexadecamer of 8 large chains and 8 small chains; disulfide-linked. The disulfide link is formed within the large subunit homodimers. Requires Mg(2+) as cofactor. Post-translationally, the disulfide bond which can form in the large chain dimeric partners within the hexadecamer appears to be associated with oxidative stress and protein turnover.

The protein localises to the plastid. The protein resides in the chloroplast. The catalysed reaction is 2 (2R)-3-phosphoglycerate + 2 H(+) = D-ribulose 1,5-bisphosphate + CO2 + H2O. The enzyme catalyses D-ribulose 1,5-bisphosphate + O2 = 2-phosphoglycolate + (2R)-3-phosphoglycerate + 2 H(+). RuBisCO catalyzes two reactions: the carboxylation of D-ribulose 1,5-bisphosphate, the primary event in carbon dioxide fixation, as well as the oxidative fragmentation of the pentose substrate in the photorespiration process. Both reactions occur simultaneously and in competition at the same active site. This Angiopteris evecta (Mule's foot fern) protein is Ribulose bisphosphate carboxylase large chain.